Reading from the N-terminus, the 375-residue chain is Peptidyl-prolyl cis-trans isomerase D (375 aa).

Residues 7-169 (YFDITIANEP…QAVTISSAGV (163 aa)) form the PPIase cyclophilin-type domain. 3 TPR repeats span residues 217 to 250 (AGKLKEVGTKEFKAGNFAVALDKYQKALRYLDVH), 270 to 307 (LPLLTNAALCALKLPASPNTSSLVVSLTSRALTLPNLS), and 312 to 345 (GKALYRRAQAYVLKKDDEAAEKDLKGALECVPGD).

This sequence belongs to the cyclophilin-type PPIase family. PPIase D subfamily.

The protein resides in the cytoplasm. It carries out the reaction [protein]-peptidylproline (omega=180) = [protein]-peptidylproline (omega=0). Functionally, PPIases accelerate the folding of proteins. It catalyzes the cis-trans isomerization of proline imidic peptide bonds in oligopeptides. This chain is Peptidyl-prolyl cis-trans isomerase D (CPR6), found in Cryptococcus neoformans var. neoformans serotype D (strain JEC21 / ATCC MYA-565) (Filobasidiella neoformans).